The following is a 502-amino-acid chain: ATP synthase subunit alpha (502 aa).

The segment at 115 to 137 (VDGLGPVETTETRPIESPAPGVM) is disordered. Residue 169-176 (GDRQTGKT) participates in ATP binding.

The protein belongs to the ATPase alpha/beta chains family. F-type ATPases have 2 components, CF(1) - the catalytic core - and CF(0) - the membrane proton channel. CF(1) has five subunits: alpha(3), beta(3), gamma(1), delta(1), epsilon(1). CF(0) has three main subunits: a(1), b(2) and c(9-12). The alpha and beta chains form an alternating ring which encloses part of the gamma chain. CF(1) is attached to CF(0) by a central stalk formed by the gamma and epsilon chains, while a peripheral stalk is formed by the delta and b chains.

The protein localises to the cell membrane. It carries out the reaction ATP + H2O + 4 H(+)(in) = ADP + phosphate + 5 H(+)(out). Produces ATP from ADP in the presence of a proton gradient across the membrane. The alpha chain is a regulatory subunit. The polypeptide is ATP synthase subunit alpha (Geobacillus kaustophilus (strain HTA426)).